A 1514-amino-acid chain; its full sequence is Mitogen-activated protein kinase-binding protein 1 (1514 aa).

Ala2 is subject to N-acetylalanine. WD repeat units follow at residues Ser88–Glu129, Glu132–Ser173, Lys175–Val213, Asp276–Thr315, Ala342–Lys381, Tyr387–Ser436, Asp477–Lys516, Ala519–Gln561, Glu565–Gln606, Val614–Leu653, Gly659–Thr698, and Gly701–Met740. Disordered regions lie at residues Arg748–Pro804, Pro880–Cys925, Glu951–Ala1256, and Asp1299–Lys1336. The segment covering Lys789–Leu800 has biased composition (acidic residues). 2 stretches are compositionally biased toward polar residues: residues Leu905–Cys925 and Asp961–Gln971. Residues Asp996–Pro1011 are compositionally biased toward low complexity. A compositionally biased stretch (acidic residues) spans Asp1032–Gly1048. Low complexity predominate over residues Pro1113–Pro1126. 2 stretches are compositionally biased toward polar residues: residues Ser1188 to His1200 and His1245 to Ala1256. Ser1198 is modified (phosphoserine).

In terms of assembly, can form homodimers (via C-terminus). Interacts (via C-terminus) with WDR62 (via C-terminus). Interacts with MAPK9. Interacts (via N-terminus) with NOD2; the interaction is enhanced in presence of muramyl dipeptide (MDP). Interacts with MAPK10. Expressed in intestinal mucosa, where it is detected in epithelial cells, endothelial cells, smooth muscle cells and immune cells, such as lymphocytes. Expressed in kidney.

The protein localises to the cytoplasm. It localises to the nucleus. Its subcellular location is the cytoskeleton. It is found in the spindle pole. In terms of biological role, negative regulator of NOD2 function. It down-regulates NOD2-induced processes such as activation of NF-kappa-B signaling, IL8 secretion and antibacterial response. Involved in JNK signaling pathway. This is Mitogen-activated protein kinase-binding protein 1 (MAPKBP1) from Homo sapiens (Human).